The chain runs to 920 residues: 2-oxoglutarate dehydrogenase E1 component (920 aa).

It belongs to the alpha-ketoglutarate dehydrogenase family. In terms of assembly, homodimer. Part of the 2-oxoglutarate dehydrogenase (OGDH) complex composed of E1 (2-oxoglutarate dehydrogenase), E2 (dihydrolipoamide succinyltransferase) and E3 (dihydrolipoamide dehydrogenase); the complex contains multiple copies of the three enzymatic components (E1, E2 and E3). It depends on thiamine diphosphate as a cofactor.

It carries out the reaction N(6)-[(R)-lipoyl]-L-lysyl-[protein] + 2-oxoglutarate + H(+) = N(6)-[(R)-S(8)-succinyldihydrolipoyl]-L-lysyl-[protein] + CO2. Functionally, E1 component of the 2-oxoglutarate dehydrogenase (OGDH) complex which catalyzes the decarboxylation of 2-oxoglutarate, the first step in the conversion of 2-oxoglutarate to succinyl-CoA and CO(2). The protein is 2-oxoglutarate dehydrogenase E1 component of Leptospira interrogans serogroup Icterohaemorrhagiae serovar copenhageni (strain Fiocruz L1-130).